Reading from the N-terminus, the 588-residue chain is Proteasome-associated ATPase (588 aa).

Over residues Met-1–Arg-10 the composition is skewed to basic and acidic residues. A disordered region spans residues Met-1–Gly-23. Residues Arg-47–Pro-94 are a coiled coil. Gly-276 to Leu-281 serves as a coordination point for ATP. Positions Tyr-587–Leu-588 are docks into pockets in the proteasome alpha-ring.

It belongs to the AAA ATPase family. As to quaternary structure, homohexamer. Assembles into a hexameric ring structure that caps the 20S proteasome core. Strongly interacts with the prokaryotic ubiquitin-like protein Pup through a hydrophobic interface; the interacting region of ARC lies in its N-terminal coiled-coil domain. There is one Pup binding site per ARC hexamer ring. Upon ATP-binding, the C-terminus of ARC interacts with the alpha-rings of the proteasome core, possibly by binding to the intersubunit pockets.

It participates in protein degradation; proteasomal Pup-dependent pathway. Its function is as follows. ATPase which is responsible for recognizing, binding, unfolding and translocation of pupylated proteins into the bacterial 20S proteasome core particle. May be essential for opening the gate of the 20S proteasome via an interaction with its C-terminus, thereby allowing substrate entry and access to the site of proteolysis. Thus, the C-termini of the proteasomal ATPase may function like a 'key in a lock' to induce gate opening and therefore regulate proteolysis. The protein is Proteasome-associated ATPase of Streptomyces coelicolor (strain ATCC BAA-471 / A3(2) / M145).